We begin with the raw amino-acid sequence, 373 residues long: SH3 domain-binding protein 5-like (373 aa).

The disordered stretch occupies residues 1–53 (MEGKEGPSCEVRLPTPGAEREGPIHPELGAFGETASNTIKLSESSNDGKKEEI). The segment covering 34–45 (TASNTIKLSESS) has biased composition (polar residues). Coiled-coil stretches lie at residues 55 to 98 (EELD…ESAR) and 170 to 272 (WQEM…SEEI). 2 disordered regions span residues 276–305 (RTQS…TGPP) and 344–373 (TGAV…SVSL). Positions 344-358 (TGAVECGGSRERGGD) are enriched in basic and acidic residues.

The protein belongs to the SH3BP5 family.

Functions as a guanine nucleotide exchange factor (GEF) for rab11a. This Xenopus tropicalis (Western clawed frog) protein is SH3 domain-binding protein 5-like (sh3bp5l).